The following is a 420-amino-acid chain: F-box protein At5g07610 (420 aa).

Residues 1–25 are disordered; it reads MSSCSRTRTKAPRSARSRRNGGFSS. Positions 7–19 are enriched in basic residues; it reads TRTKAPRSARSRR. The F-box domain occupies 27 to 77; sequence SATIVADIDDVLIQILSFLPIKTLLRFKRVSKRWLSLITNPVFSNRVIKSN.

In Arabidopsis thaliana (Mouse-ear cress), this protein is F-box protein At5g07610.